Consider the following 444-residue polypeptide: MPFIVNTDAERAEMLREIGVENFEALIADIPEEVRLKKALDLLPAMGEPEVKSLLEKMASSNAATCDHVSFLGAGAYDHFIPAAVKTIASRSEFYTAYTPYQAEVSQGTLQAIYEYQSVMCRLYGMDVANASMYDGASALAEAALIALNVTGRNGIVVAGKLHPYTSQVLETYLEAAGDRPIVQNSIEDGIGSVAALETLVSSETAAVIVQQPNFYGCLEEVEAIGEIAKKHGALFIVSADPVSLGVLEAPGNYGADIAVGEGQSVGNAQSFGGPYLGILTVKQAHVRKIPGRLVGMTKDKDGNDGFILTLQTREQHIRREKATSNICSNQALCALQAVVHLSLLGKEGIQDVANRSMQKAHYLADRITELPGFSLKFSAPFFREFVVETPVPAATIIEKMLDKKVFAGVDLSAWGEDGLLIAVTEKRTKEELDSFVSELASLG.

Belongs to the GcvP family. N-terminal subunit subfamily. In terms of assembly, the glycine cleavage system is composed of four proteins: P, T, L and H. In this organism, the P 'protein' is a heterodimer of two subunits.

It carries out the reaction N(6)-[(R)-lipoyl]-L-lysyl-[glycine-cleavage complex H protein] + glycine + H(+) = N(6)-[(R)-S(8)-aminomethyldihydrolipoyl]-L-lysyl-[glycine-cleavage complex H protein] + CO2. In terms of biological role, the glycine cleavage system catalyzes the degradation of glycine. The P protein binds the alpha-amino group of glycine through its pyridoxal phosphate cofactor; CO(2) is released and the remaining methylamine moiety is then transferred to the lipoamide cofactor of the H protein. The chain is Probable glycine dehydrogenase (decarboxylating) subunit 1 from Chlorobaculum parvum (strain DSM 263 / NCIMB 8327) (Chlorobium vibrioforme subsp. thiosulfatophilum).